The sequence spans 631 residues: Phosphomethylpyrimidine synthase (631 aa).

Substrate-binding positions include Asn-239, Met-268, Tyr-297, His-333, 353 to 355, 394 to 397, and Glu-433; these read SRG and DGLR. Residue His-437 coordinates Zn(2+). Tyr-460 contributes to the substrate binding site. A Zn(2+)-binding site is contributed by His-501. Cys-581, Cys-584, and Cys-589 together coordinate [4Fe-4S] cluster.

This sequence belongs to the ThiC family. As to quaternary structure, homodimer. The cofactor is [4Fe-4S] cluster.

The enzyme catalyses 5-amino-1-(5-phospho-beta-D-ribosyl)imidazole + S-adenosyl-L-methionine = 4-amino-2-methyl-5-(phosphooxymethyl)pyrimidine + CO + 5'-deoxyadenosine + formate + L-methionine + 3 H(+). The protein operates within cofactor biosynthesis; thiamine diphosphate biosynthesis. In terms of biological role, catalyzes the synthesis of the hydroxymethylpyrimidine phosphate (HMP-P) moiety of thiamine from aminoimidazole ribotide (AIR) in a radical S-adenosyl-L-methionine (SAM)-dependent reaction. The chain is Phosphomethylpyrimidine synthase from Ralstonia nicotianae (strain ATCC BAA-1114 / GMI1000) (Ralstonia solanacearum).